The following is a 147-amino-acid chain: 16 kDa phloem protein 2 (147 aa).

The 103-residue stretch at 1–103 folds into the C2 domain; the sequence is MPHGTLEVVL…FVEGSIPPTA (103 aa). Ca(2+) is bound by residues D20, D26, D73, D75, and D81. A disordered region spans residues 126–147; it reads ENRSRGMDEESYGGWKNSEASY.

It depends on Ca(2+) as a cofactor.

Its function is as follows. Binds to both sense and antisense RNA. Can also bind sheared DNA and dodecamer DNA with a low affinity. Interacts with mesophyll plasmodesmata to mediate its own cell-to-cell transport and potentiate RNA trafficking. May play a role in plant defense signaling. The protein is 16 kDa phloem protein 2 of Arabidopsis thaliana (Mouse-ear cress).